Consider the following 105-residue polypeptide: MGRIENDNQDVSDDGSIIRVKLPNKRIREQFAQAELMLGSNHIRVRCSDGVTRLGRIKGKIKKRVWIREGDILIVVPWDFQDDKCDIIYRYTTPQVDWLRAHKYL.

Residues 18-92 (IRVKLPNKRI…DKCDIIYRYT (75 aa)) enclose the S1-like domain.

This sequence belongs to the eIF-1A family.

In terms of biological role, seems to be required for maximal rate of protein biosynthesis. Enhances ribosome dissociation into subunits and stabilizes the binding of the initiator Met-tRNA(I) to 40 S ribosomal subunits. In Methanocorpusculum labreanum (strain ATCC 43576 / DSM 4855 / Z), this protein is Translation initiation factor 1A (eIF1A).